The following is a 257-amino-acid chain: Small ribosomal subunit protein eS1 (257 aa).

The segment at 237–257 (GADGEKVDRPDDYEPPVQQEV) is disordered. Basic and acidic residues predominate over residues 239-248 (DGEKVDRPDD).

The protein belongs to the eukaryotic ribosomal protein eS1 family. As to quaternary structure, component of the small ribosomal subunit. Mature ribosomes consist of a small (40S) and a large (60S) subunit. The 40S subunit contains about 33 different proteins and 1 molecule of RNA (18S). The 60S subunit contains about 49 different proteins and 3 molecules of RNA (28S, 5.8S and 5S).

Its subcellular location is the cytoplasm. The protein is Small ribosomal subunit protein eS1 of Caenorhabditis elegans.